The chain runs to 463 residues: Asparagine--tRNA ligase (463 aa).

It belongs to the class-II aminoacyl-tRNA synthetase family. Homodimer.

The protein resides in the cytoplasm. The enzyme catalyses tRNA(Asn) + L-asparagine + ATP = L-asparaginyl-tRNA(Asn) + AMP + diphosphate + H(+). This Bacillus cereus (strain ZK / E33L) protein is Asparagine--tRNA ligase.